Here is a 282-residue protein sequence, read N- to C-terminus: Large ribosomal subunit protein uL2 (282 aa).

2 disordered regions span residues 31–54 (KRLTKPVRKSGGRNAHGKVTTRHI) and 223–282 (LAMN…NTQR). Composition is skewed to basic residues over residues 34–54 (TKPVRKSGGRNAHGKVTTRHI) and 270–282 (VTRRRPGVRNTQR).

Belongs to the universal ribosomal protein uL2 family. As to quaternary structure, part of the 50S ribosomal subunit. Forms a bridge to the 30S subunit in the 70S ribosome.

Its function is as follows. One of the primary rRNA binding proteins. Required for association of the 30S and 50S subunits to form the 70S ribosome, for tRNA binding and peptide bond formation. It has been suggested to have peptidyltransferase activity; this is somewhat controversial. Makes several contacts with the 16S rRNA in the 70S ribosome. This Anaeromyxobacter dehalogenans (strain 2CP-1 / ATCC BAA-258) protein is Large ribosomal subunit protein uL2.